Reading from the N-terminus, the 320-residue chain is uncharacterized protein (320 aa).

Residues 196–273 (VVPEYDFDSE…RSKNNSNTTK (78 aa)) are disordered. Positions 200–210 (YDFDSESESDN) are enriched in acidic residues. The span at 211-226 (SEEKRFVPVLETEKAP) shows a compositional bias: basic and acidic residues. The span at 248-273 (QPKNPKQTTLKNTLDTRSKNNSNTTK) shows a compositional bias: polar residues.

This is an uncharacterized protein from Acanthamoeba polyphaga mimivirus (APMV).